Consider the following 518-residue polypeptide: Protein CYCLOPS (518 aa).

The segment at 401–451 (DKKRKSLERYGSITSAVSDDKGDTTKKRRVERSRKMAEAKERNSTPSVPSD) is disordered. 2 short sequence motifs (nuclear localization signal) span residues 402–405 (KKRK) and 426–429 (KKRR). Residues 433 to 443 (SRKMAEAKERN) are compositionally biased toward basic and acidic residues. Residues 452 to 518 (MQAVLKRCEN…ERILSETEKM (67 aa)) are a coiled coil.

The protein belongs to the CYCLOPS family. Forms homodimers. Interacts with CCAMK. Post-translationally, phosphorylated at the N-terminus by CCAMK. As to expression, expressed in roots.

It localises to the nucleus. In terms of biological role, involved in symbiotic signaling. Required for root infection by symbiotic rhizobia, infection thread (IT) formation, and nodule development. Probably not involved in nodule organogenesis. Involved in arbuscular mycorrhizal (AM) symbiosis. Required for fungal infection of the outer cortical cell layers, and for arbuscule development during the AM symbiosis, by binding, as a complex comprising CCaMK, CYCLOPS, and DELLA, to RAM1 promoter cis element thus promoting its expression. Acts downstream of CCAMK. Binds to the promoter of ERN1 and strongly transactivates ERN1, a transcriptional regulator required for nodulation. The chain is Protein CYCLOPS from Lotus japonicus (Lotus corniculatus var. japonicus).